Reading from the N-terminus, the 247-residue chain is 2,3-bisphosphoglycerate-dependent phosphoglycerate mutase (247 aa).

Residues 8-15, 21-22, Arg-60, 87-90, Lys-98, 114-115, and 183-184 contribute to the substrate site; these read RHGESQWN, TG, ERHY, RR, and GN. His-9 acts as the Tele-phosphohistidine intermediate in catalysis. Catalysis depends on Glu-87, which acts as the Proton donor/acceptor.

Belongs to the phosphoglycerate mutase family. BPG-dependent PGAM subfamily.

It catalyses the reaction (2R)-2-phosphoglycerate = (2R)-3-phosphoglycerate. The protein operates within carbohydrate degradation; glycolysis; pyruvate from D-glyceraldehyde 3-phosphate: step 3/5. Catalyzes the interconversion of 2-phosphoglycerate and 3-phosphoglycerate. The chain is 2,3-bisphosphoglycerate-dependent phosphoglycerate mutase from Chlorobaculum tepidum (strain ATCC 49652 / DSM 12025 / NBRC 103806 / TLS) (Chlorobium tepidum).